Here is an 86-residue protein sequence, read N- to C-terminus: UPF0457 protein SERP1772 (86 aa).

This sequence belongs to the UPF0457 family.

The protein is UPF0457 protein SERP1772 of Staphylococcus epidermidis (strain ATCC 35984 / DSM 28319 / BCRC 17069 / CCUG 31568 / BM 3577 / RP62A).